The sequence spans 119 residues: Beta-2-microglobulin (119 aa).

A signal peptide spans 1–20 (MARSVAVVFLMLLSVVCLDA). One can recognise an Ig-like C1-type domain in the interval 25-114 (PQVQVYTRHP…TTLKEPKVVT (90 aa)). An intrachain disulfide couples Cys-45 to Cys-100.

It belongs to the beta-2-microglobulin family. In terms of assembly, heterodimer of an alpha chain and a beta chain. Beta-2-microglobulin is the beta-chain of major histocompatibility complex class I molecules.

It is found in the secreted. In terms of biological role, component of the class I major histocompatibility complex (MHC). Involved in the presentation of peptide antigens to the immune system. This Cricetulus griseus (Chinese hamster) protein is Beta-2-microglobulin (B2M).